Consider the following 131-residue polypeptide: MVTLYTSPSCTSCRKARAWLEEHEIPFVERNIFSEPLSIDEIKQILRMTEDGTDEIISTRSKVFQKLNVNVESMPLQDLYRLINEHPGLLRRPIIIDEKRLQVGYNEDEIRRFLPRKVRSFQLREAQRLAN.

The CXXC signature appears at 10–13; the sequence is CTSC. A disulfide bridge connects residues C10 and C13.

This sequence belongs to the ArsC family. Spx subfamily. As to quaternary structure, interacts with the C-terminal domain of the alpha subunit of the RNAP. A single Spx monomer interacts with RNAP to form the transcription activation complex. Interacts with the adapter protein SpxH/YjbH.

The protein resides in the cytoplasm. Under non-stress conditions, Spx is degraded by ClpXP and, to a lesser extent, by ClpCP. Efficient dedradation by ClpXP requires the adapter protein SpxH/YjbH. Binding to SpxH/YjbH reduces the overall conformational flexibility of Spx and stabilizes the C-terminal ClpX recognition region of Spx. In addition, activity is modulated by the formation of a disulfide bound within the N-terminal Cys-X-X-Cys (CXXC) motif, which is required for the transcriptional activation of trxA and trxB, or for the activation of msrAB operon expression following paraquat oxidative stress. However, it seems that formation of the disulfide bound is not essential for induction of all Spx-controlled genes, as for example the case of BSH biosynthesis genes. Similarly, induction of the Spx regulon during cell wall stress is not accompanied by oxidation of the disulfide switch, but requires Spx stabilization by the anti-adapter protein SpxO/YirB. Global transcriptional regulator that plays a key role in stress response and exerts either positive or negative regulation of genes. Acts by interacting with the C-terminal domain of the alpha subunit of the RNA polymerase (RNAP). This interaction can enhance binding of RNAP to the promoter region of target genes and stimulate their transcription, or block interaction of RNAP with activator proteins and repress transcription. Exhibits no DNA-binding activity. Functionally, induces the expression of a large number of genes in response to a variety of stress conditions, such as disulfide, heat and cell wall stress, while concurrently repressing transcription of genes involved in various developmental and growth-related pathways during periods of extreme stress. Functions in the oxidative stress response via induction of the transcription of thioredoxin (trxA) and thioredoxin reductase (trxB) during thiol-specific oxidative (disulfide) stress. Mediates response to oxidative stress caused by paraquat (PQ) via induction of the methionine sulfoxide reductase genes, msrA and msrB. Also acts as a transcriptional activator of the bacillithiol (BSH) biosynthesis genes in response to oxidizing conditions and thio-reactive compounds. Involved in heat stress response and thermotolerance development, which results in diminished cellular protein aggregates. Plays an important adaptive role in the cell wall stress response. Participates in sulfate-dependent control of organosulfur metabolism. Negatively controls, via CymR, the expression of the organosulfur utilization operons ytmI, yxeI and ssu, and directly activates yrrT operon expression during growth in medium containing methionine as sole sulfur source. Negatively affects competence and sporulation. Inhibits biofilm formation in response to disulfide stress by repressing biofilm matrix genes. This Bacillus subtilis (strain 168) protein is Global transcriptional regulator Spx.